The primary structure comprises 76 residues: Large ribosomal subunit protein bL31 (76 aa).

Zn(2+)-binding residues include cysteine 16, cysteine 18, cysteine 37, and cysteine 40.

The protein belongs to the bacterial ribosomal protein bL31 family. Type A subfamily. As to quaternary structure, part of the 50S ribosomal subunit. Requires Zn(2+) as cofactor.

Binds the 23S rRNA. The sequence is that of Large ribosomal subunit protein bL31 from Solibacter usitatus (strain Ellin6076).